The primary structure comprises 177 residues: Interleukin-1 receptor antagonist protein (177 aa).

The first 25 residues, M1–C25, serve as a signal peptide directing secretion. Cysteines 91 and 141 form a disulfide. N-linked (GlcNAc...) asparagine glycosylation is present at N109.

The protein belongs to the IL-1 family. In terms of tissue distribution, the intracellular form of IL1RN is predominantly expressed in epithelial cells.

The protein resides in the secreted. The protein localises to the cytoplasm. Anti-inflammatory antagonist of interleukin-1 family of proinflammatory cytokines such as interleukin-1beta/IL1B and interleukin-1alpha/IL1A. Protects from immune dysregulation and uncontrolled systemic inflammation triggered by IL1 for a range of innate stimulatory agents such as pathogens. The polypeptide is Interleukin-1 receptor antagonist protein (IL1RN) (Homo sapiens (Human)).